The sequence spans 397 residues: uncharacterized protein (397 aa).

Transmembrane regions (helical) follow at residues 1–21 (MGAS…LMLV), 39–59 (VIQS…VVVF), 76–96 (EALS…FGVP), 103–123 (VLLF…FVGA), 124–144 (ALIE…LVMA), 194–214 (MMTP…LFAF), 219–239 (ALFG…FSLL), 255–275 (LVYL…KLML), and 301–321 (QSLT…FWSA).

The protein belongs to the TerC family.

It is found in the cell membrane. This is an uncharacterized protein from Mycobacterium tuberculosis (strain CDC 1551 / Oshkosh).